We begin with the raw amino-acid sequence, 330 residues long: Protein RfbI (330 aa).

The region spanning 3–89 (HIIKIFPSNI…ELNAHFFPEL (87 aa)) is the 2Fe-2S ferredoxin-type domain. Residues Cys37, Cys42, and Cys45 each contribute to the [2Fe-2S] cluster site. Positions 94–192 (KKIVPCKVNS…EGPCGTFFIR (99 aa)) constitute an FAD-binding FR-type domain.

It depends on [2Fe-2S] cluster as a cofactor.

Its pathway is bacterial outer membrane biogenesis; LPS O-antigen biosynthesis. In Salmonella typhimurium (strain LT2 / SGSC1412 / ATCC 700720), this protein is Protein RfbI (rfbI).